The chain runs to 467 residues: Probable Xaa-Pro aminopeptidase SMAC_04549 (467 aa).

The Mn(2+) site is built by aspartate 263, aspartate 274, glutamate 397, and glutamate 437.

This sequence belongs to the peptidase M24B family. The cofactor is Mn(2+).

The catalysed reaction is Release of any N-terminal amino acid, including proline, that is linked to proline, even from a dipeptide or tripeptide.. Its function is as follows. Catalyzes the removal of a penultimate prolyl residue from the N-termini of peptides. In Sordaria macrospora (strain ATCC MYA-333 / DSM 997 / K(L3346) / K-hell), this protein is Probable Xaa-Pro aminopeptidase SMAC_04549.